The chain runs to 235 residues: Ribosomal RNA small subunit methyltransferase G (235 aa).

Residues glycine 98, methionine 103, 149 to 150 (VE), and arginine 164 each bind S-adenosyl-L-methionine.

Belongs to the methyltransferase superfamily. RNA methyltransferase RsmG family.

It localises to the cytoplasm. The enzyme catalyses guanosine(527) in 16S rRNA + S-adenosyl-L-methionine = N(7)-methylguanosine(527) in 16S rRNA + S-adenosyl-L-homocysteine. Its function is as follows. Specifically methylates the N7 position of guanine in position 527 of 16S rRNA. The protein is Ribosomal RNA small subunit methyltransferase G of Cupriavidus pinatubonensis (strain JMP 134 / LMG 1197) (Cupriavidus necator (strain JMP 134)).